The chain runs to 539 residues: CTP synthase (539 aa).

The interval 1 to 269 is amidoligase domain; that stretch reads MSATKYIFVT…DERVLSKLKL (269 aa). A CTP-binding site is contributed by Ser15. Ser15 lines the UTP pocket. 16–21 is an ATP binding site; it reads SLGKGI. Tyr56 is a binding site for L-glutamine. Residue Asp73 participates in ATP binding. Positions 73 and 143 each coordinate Mg(2+). CTP-binding positions include 150 to 152, 190 to 195, and Lys226; these read DIE and KTKPTQ. UTP contacts are provided by residues 190 to 195 and Lys226; that span reads KTKPTQ. Residues 295-537 form the Glutamine amidotransferase type-1 domain; that stretch reads NIALVGKYVE…VKAANDFAKG (243 aa). Position 357 (Gly357) interacts with L-glutamine. Cys384 serves as the catalytic Nucleophile; for glutamine hydrolysis. Residues 385–388, Glu408, and Arg465 each bind L-glutamine; that span reads LGMQ. Residues His510 and Glu512 contribute to the active site.

This sequence belongs to the CTP synthase family. As to quaternary structure, homotetramer.

The catalysed reaction is UTP + L-glutamine + ATP + H2O = CTP + L-glutamate + ADP + phosphate + 2 H(+). It catalyses the reaction L-glutamine + H2O = L-glutamate + NH4(+). It carries out the reaction UTP + NH4(+) + ATP = CTP + ADP + phosphate + 2 H(+). Its pathway is pyrimidine metabolism; CTP biosynthesis via de novo pathway; CTP from UDP: step 2/2. Its activity is regulated as follows. Allosterically activated by GTP, when glutamine is the substrate; GTP has no effect on the reaction when ammonia is the substrate. The allosteric effector GTP functions by stabilizing the protein conformation that binds the tetrahedral intermediate(s) formed during glutamine hydrolysis. Inhibited by the product CTP, via allosteric rather than competitive inhibition. Its function is as follows. Catalyzes the ATP-dependent amination of UTP to CTP with either L-glutamine or ammonia as the source of nitrogen. Regulates intracellular CTP levels through interactions with the four ribonucleotide triphosphates. This chain is CTP synthase, found in Cytophaga hutchinsonii (strain ATCC 33406 / DSM 1761 / CIP 103989 / NBRC 15051 / NCIMB 9469 / D465).